A 209-amino-acid polypeptide reads, in one-letter code: Uracil phosphoribosyltransferase (209 aa).

Residues Arg-79, Arg-104, and 131–139 (DPMLATGGS) contribute to the 5-phospho-alpha-D-ribose 1-diphosphate site. Residues Ile-194 and 199–201 (GDA) each bind uracil. A 5-phospho-alpha-D-ribose 1-diphosphate-binding site is contributed by Asp-200.

Belongs to the UPRTase family. Mg(2+) serves as cofactor.

It carries out the reaction UMP + diphosphate = 5-phospho-alpha-D-ribose 1-diphosphate + uracil. Its pathway is pyrimidine metabolism; UMP biosynthesis via salvage pathway; UMP from uracil: step 1/1. Allosterically activated by GTP. Catalyzes the conversion of uracil and 5-phospho-alpha-D-ribose 1-diphosphate (PRPP) to UMP and diphosphate. This chain is Uracil phosphoribosyltransferase, found in Natranaerobius thermophilus (strain ATCC BAA-1301 / DSM 18059 / JW/NM-WN-LF).